The following is a 294-amino-acid chain: ATP synthase gamma chain (294 aa).

This sequence belongs to the ATPase gamma chain family. F-type ATPases have 2 components, CF(1) - the catalytic core - and CF(0) - the membrane proton channel. CF(1) has five subunits: alpha(3), beta(3), gamma(1), delta(1), epsilon(1). CF(0) has three main subunits: a, b and c.

The protein localises to the cell inner membrane. Functionally, produces ATP from ADP in the presence of a proton gradient across the membrane. The gamma chain is believed to be important in regulating ATPase activity and the flow of protons through the CF(0) complex. The protein is ATP synthase gamma chain of Rhizobium etli (strain CIAT 652).